We begin with the raw amino-acid sequence, 412 residues long: MMRKLAILSVSSFLFVEALFQEYQCYGSSSNTRVLNELNYDNAGTNLYNELEMNYYGKQENWYSLKKNSRSLGENDDGNNNNGDNGREGKDEDKRDGNNEDNEKLRKPKHKKLKQPGDGNPDPNANPNVDPNANPNVDPNANPNVDPNANPNANPNANPNANPNANPNANPNANPNANPNANPNANPNANPNANPNANPNANPNANPNVDPNANPNANPNANPNANPNANPNANPNANPNANPNANPNANPNANPNANPNANPNANPNANPNANPNANPNANPNANPNKNNQGNGQGHNMPNDPNRNVDENANANNAVKNNNNEEPSDKHIEQYLKKIKNSISTEWSPCSVTCGNGIQVRIKPGSANKPKDELDYENDIEKKICKMEKCSSVFNVVNSSIGLIMVLSFLFLN.

The signal sequence occupies residues Met1–Ala18. The tract at residues Ser69–Asp328 is disordered. Residues Asn85–Leu105 show a composition bias toward basic and acidic residues. The tract at residues Lys104 to Lys111 is required for the binding to heparan sulfate proteoglycans (HSPGs) on the surface of host hepatocytes. Positions Lys112–Pro116 are region I; contains the proteolytic cleavage site. Residues Asn120 to Asn288 are compositionally biased toward low complexity. 41 consecutive repeat copies span residues Pro123–Asn126, Pro127–Asp130, Pro131–Asn134, Pro135–Asp138, Pro139–Asn142, Pro143–Asp146, Pro147–Asn150, Pro151–Asn154, Pro155–Asn158, Pro159–Asn162, Pro163–Asn166, Pro167–Asn170, Pro171–Asn174, Pro175–Asn178, Pro179–Asn182, Pro183–Asn186, Pro187–Asn190, Pro191–Asn194, Pro195–Asn198, Pro199–Asn202, Pro203–Asn206, Pro207–Asp210, Pro211–Asn214, Pro215–Asn218, Pro219–Asn222, Pro223–Asn226, Pro227–Asn230, Pro231–Asn234, Pro235–Asn238, Pro239–Asn242, Pro243–Asn246, Pro247–Asn250, Pro251–Asn254, Pro255–Asn258, Pro259–Asn262, Pro263–Asn266, Pro267–Asn270, Pro271–Asn274, Pro275–Asn278, Pro279–Asn282, and Pro283–Asn286. Residues Pro123 to Asn286 form a 41 X 4 AA tandem repeats of P-N-[AV]-[ND] region. Residues Lys289–Pro304 are compositionally biased toward polar residues. Positions Glu310–Glu324 are enriched in low complexity. Residues Lys337–Ser390 form the TSP type-1 domain. Cystine bridges form between Cys349/Cys384 and Cys353/Cys389. The O-linked (Fuc) threonine glycan is linked to Thr352. Cys389 carries GPI-anchor amidated cysteine lipidation. A propeptide spans Ser390–Asn412 (removed in mature form).

This sequence belongs to the plasmodium circumsporozoite protein family. In terms of processing, during host cell invasion, proteolytically cleaved at the cell membrane in the region I by a papain-like cysteine protease of parasite origin. Cleavage is triggered by the sporozoite contact with highly sulfated heparan sulfate proteoglycans (HSPGs) present on the host hepatocyte cell surface. Cleavage exposes the TSP type-1 (TSR) domain and is required for productive invasion of host hepatocytes but not for adhesion to the host cell membrane. Cleavage is dispensable for sporozoite development in the oocyst, motility and for traversal of host and vector cells. O-glycosylated; maybe by POFUT2.

It localises to the cell membrane. The protein localises to the cytoplasm. Functionally, essential sporozoite protein. In the mosquito vector, required for sporozoite development in the oocyst, migration through the vector hemolymph and entry into the vector salivary glands. In the vertebrate host, required for sporozoite migration through the host dermis and infection of host hepatocytes. Binds to highly sulfated heparan sulfate proteoglycans (HSPGs) on the surface of host hepatocytes. Its function is as follows. In the vertebrate host, binds to highly sulfated heparan sulfate proteoglycans (HSPGs) on the surface of host hepatocytes and is required for sporozoite invasion of the host hepatocytes. This is Circumsporozoite protein from Plasmodium falciparum.